The following is a 249-amino-acid chain: 3-deoxy-manno-octulosonate cytidylyltransferase (249 aa).

It belongs to the KdsB family.

It is found in the cytoplasm. It carries out the reaction 3-deoxy-alpha-D-manno-oct-2-ulosonate + CTP = CMP-3-deoxy-beta-D-manno-octulosonate + diphosphate. Its pathway is nucleotide-sugar biosynthesis; CMP-3-deoxy-D-manno-octulosonate biosynthesis; CMP-3-deoxy-D-manno-octulosonate from 3-deoxy-D-manno-octulosonate and CTP: step 1/1. It participates in bacterial outer membrane biogenesis; lipopolysaccharide biosynthesis. In terms of biological role, activates KDO (a required 8-carbon sugar) for incorporation into bacterial lipopolysaccharide in Gram-negative bacteria. In Oleidesulfovibrio alaskensis (strain ATCC BAA-1058 / DSM 17464 / G20) (Desulfovibrio alaskensis), this protein is 3-deoxy-manno-octulosonate cytidylyltransferase.